The chain runs to 245 residues: 5-oxoprolinase subunit A (245 aa).

This sequence belongs to the LamB/PxpA family. In terms of assembly, forms a complex composed of PxpA, PxpB and PxpC.

The catalysed reaction is 5-oxo-L-proline + ATP + 2 H2O = L-glutamate + ADP + phosphate + H(+). Its function is as follows. Catalyzes the cleavage of 5-oxoproline to form L-glutamate coupled to the hydrolysis of ATP to ADP and inorganic phosphate. In Neisseria meningitidis serogroup A / serotype 4A (strain DSM 15465 / Z2491), this protein is 5-oxoprolinase subunit A.